Here is a 349-residue protein sequence, read N- to C-terminus: MSDFNTLRWLHGQPQGQGRLKVSPTDFQVVEDLGFAPDGDGEHLLVRIRKTGCNTRAVADALAKFLGIAAREVSFAGQKDKYAVTEQWLCARLPGKEMPAMRAFTLEGCEVLEFARHRRKLRLGALKGNRFSLVLRDITHRDEIEQRLSLISEKGVPNYFGPQRFGRGGSNIYQAKRWAQTGQPPRERNKRGFALSAARSLMFNTLVSERLQRFGVNQVMDGDALQLAGRGSWFVTTPEELTDLQARVDSGELLITAALPGSGDWGTQRAALAFEQATLADETELLTLLTREKVEAARRAMLLFPRELRWQWQDDATLEVSFWLPAGSFATSVIRELFNTADDVSDISE.

Substrate is bound at residue Phe27. Asp80 serves as the catalytic Nucleophile. Asn129 is a binding site for substrate. In terms of domain architecture, TRUD spans 155–303 (GVPNYFGPQR…VEAARRAMLL (149 aa)). Phe329 lines the substrate pocket.

Belongs to the pseudouridine synthase TruD family.

It catalyses the reaction uridine(13) in tRNA = pseudouridine(13) in tRNA. In terms of biological role, responsible for synthesis of pseudouridine from uracil-13 in transfer RNAs. This Cronobacter sakazakii (strain ATCC BAA-894) (Enterobacter sakazakii) protein is tRNA pseudouridine synthase D.